We begin with the raw amino-acid sequence, 406 residues long: Fructose-1,6-bisphosphatase, chloroplastic (406 aa).

A chloroplast-targeting transit peptide spans 1-47; that stretch reads MAAAATTSSHLLLLSRQQAAASLQCGLSFRRQPGRLAGGSSAPSVRC. The Mg(2+) site is built by E128, E157, D178, L180, and D181. Residue 181-184 coordinates substrate; the sequence is DGSS. C222 and C227 are disulfide-bonded. Residues N286, Y318, Y336, Y338, and K348 each coordinate substrate. E354 contacts Mg(2+).

Belongs to the FBPase class 1 family. In terms of assembly, homotetramer. It depends on Mg(2+) as a cofactor.

The protein resides in the plastid. Its subcellular location is the chloroplast stroma. The enzyme catalyses beta-D-fructose 1,6-bisphosphate + H2O = beta-D-fructose 6-phosphate + phosphate. It participates in carbohydrate biosynthesis; Calvin cycle. Its activity is regulated as follows. Inhibited by sodium chloride. In terms of biological role, catalyzes the irreversible reaction from fructose-1,6-bisphosphate to fructose-6-phosphate and inorganic phosphate, to regenerate the primary CO(2) acceptor molecule, ribulose-1,5-bisphosphate. Involved in the regulation of photosynthetic performance and sucrose synthesis. The sequence is that of Fructose-1,6-bisphosphatase, chloroplastic from Oryza sativa subsp. indica (Rice).